Here is a 259-residue protein sequence, read N- to C-terminus: Tryptophan synthase alpha chain (259 aa).

Catalysis depends on proton acceptor residues Glu35 and Asp46.

This sequence belongs to the TrpA family. As to quaternary structure, tetramer of two alpha and two beta chains.

It catalyses the reaction (1S,2R)-1-C-(indol-3-yl)glycerol 3-phosphate + L-serine = D-glyceraldehyde 3-phosphate + L-tryptophan + H2O. It functions in the pathway amino-acid biosynthesis; L-tryptophan biosynthesis; L-tryptophan from chorismate: step 5/5. In terms of biological role, the alpha subunit is responsible for the aldol cleavage of indoleglycerol phosphate to indole and glyceraldehyde 3-phosphate. The chain is Tryptophan synthase alpha chain from Methanococcus vannielii (strain ATCC 35089 / DSM 1224 / JCM 13029 / OCM 148 / SB).